Here is a 343-residue protein sequence, read N- to C-terminus: 3-dehydroquinate synthase (343 aa).

NAD(+) contacts are provided by residues 61-66, 95-99, 119-120, Lys132, Lys141, and 159-162; these read SGEKYK, GVISD, TT, and FLKT. Glu174, His231, and His248 together coordinate Zn(2+).

Belongs to the sugar phosphate cyclases superfamily. Dehydroquinate synthase family. Co(2+) serves as cofactor. The cofactor is Zn(2+). It depends on NAD(+) as a cofactor.

It is found in the cytoplasm. The enzyme catalyses 7-phospho-2-dehydro-3-deoxy-D-arabino-heptonate = 3-dehydroquinate + phosphate. The protein operates within metabolic intermediate biosynthesis; chorismate biosynthesis; chorismate from D-erythrose 4-phosphate and phosphoenolpyruvate: step 2/7. Its function is as follows. Catalyzes the conversion of 3-deoxy-D-arabino-heptulosonate 7-phosphate (DAHP) to dehydroquinate (DHQ). The sequence is that of 3-dehydroquinate synthase from Helicobacter pylori (strain P12).